The primary structure comprises 182 residues: Avenin-E (182 aa).

The stretch at 21-26 is one 1; approximate repeat; it reads PFVQQQ. A 3 X 7 AA tandem repeats of P-F-V-Q-Q-Q-Q region spans residues 21–41; sequence PFVQQQPFVQQQQQPFVQQQQ. The 2; approximate repeat unit spans residues 27–34; the sequence is PFVQQQQQ. Copy 3 of the repeat occupies 35–41; that stretch reads PFVQQQQ.

It belongs to the gliadin/glutenin family. In terms of assembly, monomer.

The protein resides in the vacuole. The protein localises to the aleurone grain. Its function is as follows. Seed storage protein. Serves as a source of nitrogen, carbon, and sulfur for the young developing seedling. This Avena sativa (Oat) protein is Avenin-E.